Here is a 161-residue protein sequence, read N- to C-terminus: Large ribosomal subunit protein uL15 (161 aa).

The segment covering 1–10 (MKLNELRDNP) has biased composition (basic and acidic residues). The tract at residues 1 to 42 (MKLNELRDNPGARPKSKRLGRGIGSGKGKTSGKGVKGQKARE) is disordered. Over residues 21-35 (RGIGSGKGKTSGKGV) the composition is skewed to gly residues.

Belongs to the universal ribosomal protein uL15 family. Part of the 50S ribosomal subunit.

Functionally, binds to the 23S rRNA. The protein is Large ribosomal subunit protein uL15 of Acidiphilium cryptum (strain JF-5).